Reading from the N-terminus, the 73-residue chain is Guanine nucleotide-binding protein G(I)/G(S)/G(O) subunit gamma-11 (73 aa).

The tract at residues 54-73 (VKGIPEDKNPFKEKGSCIIS) is disordered. A Cysteine methyl ester modification is found at Cys-70. A lipid anchor (S-farnesyl cysteine) is attached at Cys-70. A propeptide spans 71-73 (IIS) (removed in mature form).

The protein belongs to the G protein gamma family. As to quaternary structure, g proteins are composed of 3 units, alpha, beta and gamma. Interacts with beta-1 and beta-3, but not with beta-2.

It localises to the cell membrane. Its function is as follows. Guanine nucleotide-binding proteins (G proteins) are involved as a modulator or transducer in various transmembrane signaling systems. The beta and gamma chains are required for the GTPase activity, for replacement of GDP by GTP, and for G protein-effector interaction. This chain is Guanine nucleotide-binding protein G(I)/G(S)/G(O) subunit gamma-11 (GNG11), found in Bos taurus (Bovine).